The chain runs to 474 residues: Synaptotagmin-17 (474 aa).

The tract at residues 60–117 is disordered; the sequence is WLMASRSNDKDGDSVHTASDVPLTPRTNSPDGRRSSSDTSKSTYSLTRRISSLDSRRP. Residues 96 to 117 are compositionally biased toward low complexity; it reads SDTSKSTYSLTRRISSLDSRRP. A phosphoserine mark is found at Ser118 and Ser119. 2 consecutive C2 domains span residues 184–310 and 321–455; these read QLGM…HWWK and ELGE…EQWH.

This sequence belongs to the synaptotagmin family. Expressed in brain and kidney.

The protein resides in the membrane. Its function is as follows. Plays a role in dendrite formation by melanocytes. The polypeptide is Synaptotagmin-17 (Syt17) (Rattus norvegicus (Rat)).